Here is a 513-residue protein sequence, read N- to C-terminus: ATP synthase subunit alpha (513 aa).

An ATP-binding site is contributed by 169-176 (GDRQTGKS).

The protein belongs to the ATPase alpha/beta chains family. In terms of assembly, F-type ATPases have 2 components, CF(1) - the catalytic core - and CF(0) - the membrane proton channel. CF(1) has five subunits: alpha(3), beta(3), gamma(1), delta(1), epsilon(1). CF(0) has three main subunits: a(1), b(2) and c(9-12). The alpha and beta chains form an alternating ring which encloses part of the gamma chain. CF(1) is attached to CF(0) by a central stalk formed by the gamma and epsilon chains, while a peripheral stalk is formed by the delta and b chains.

The protein localises to the cell inner membrane. It carries out the reaction ATP + H2O + 4 H(+)(in) = ADP + phosphate + 5 H(+)(out). Its function is as follows. Produces ATP from ADP in the presence of a proton gradient across the membrane. The alpha chain is a regulatory subunit. The polypeptide is ATP synthase subunit alpha (Sodalis glossinidius (strain morsitans)).